Consider the following 467-residue polypeptide: Probable glycerol-3-phosphate dehydrogenase [NAD(+)] 2, cytosolic (467 aa).

NAD(+)-binding positions include 47-52 (GAGAWG), Lys195, and Ala234. Residue Lys195 participates in substrate binding. The active-site Proton acceptor is the Lys284. Arg346 and Gln374 together coordinate NAD(+). A substrate-binding site is contributed by 346 to 347 (RN).

This sequence belongs to the NAD-dependent glycerol-3-phosphate dehydrogenase family.

The protein resides in the cytoplasm. Its subcellular location is the cytosol. The enzyme catalyses sn-glycerol 3-phosphate + NAD(+) = dihydroxyacetone phosphate + NADH + H(+). Functionally, may be involved in cell redox homeostasis. The polypeptide is Probable glycerol-3-phosphate dehydrogenase [NAD(+)] 2, cytosolic (Oryza sativa subsp. japonica (Rice)).